Here is a 173-residue protein sequence, read N- to C-terminus: Crossover junction endodeoxyribonuclease RuvC (173 aa).

Residues Asp8, Glu67, and Asp139 contribute to the active site. Asp8, Glu67, and Asp139 together coordinate Mg(2+).

The protein belongs to the RuvC family. As to quaternary structure, homodimer which binds Holliday junction (HJ) DNA. The HJ becomes 2-fold symmetrical on binding to RuvC with unstacked arms; it has a different conformation from HJ DNA in complex with RuvA. In the full resolvosome a probable DNA-RuvA(4)-RuvB(12)-RuvC(2) complex forms which resolves the HJ. The cofactor is Mg(2+).

It localises to the cytoplasm. The enzyme catalyses Endonucleolytic cleavage at a junction such as a reciprocal single-stranded crossover between two homologous DNA duplexes (Holliday junction).. In terms of biological role, the RuvA-RuvB-RuvC complex processes Holliday junction (HJ) DNA during genetic recombination and DNA repair. Endonuclease that resolves HJ intermediates. Cleaves cruciform DNA by making single-stranded nicks across the HJ at symmetrical positions within the homologous arms, yielding a 5'-phosphate and a 3'-hydroxyl group; requires a central core of homology in the junction. The consensus cleavage sequence is 5'-(A/T)TT(C/G)-3'. Cleavage occurs on the 3'-side of the TT dinucleotide at the point of strand exchange. HJ branch migration catalyzed by RuvA-RuvB allows RuvC to scan DNA until it finds its consensus sequence, where it cleaves and resolves the cruciform DNA. The chain is Crossover junction endodeoxyribonuclease RuvC from Shewanella sp. (strain ANA-3).